The chain runs to 166 residues: Succinate dehydrogenase [ubiquinone] cytochrome b small subunit, mitochondrial (166 aa).

The Mitochondrial matrix portion of the chain corresponds to 1-65 (MASVARSSAL…VPPPSPSHGS (65 aa)). The helical transmembrane segment at 66–87 (YHWTFDRVVAAGLIPLTVAPFA) threads the bilayer. The Mitochondrial intermembrane segment spans residues 88 to 94 (AGSLNPT). Residues 95–115 (MDAVLAATILIHSHTGFGNII) form a helical membrane-spanning segment. His-106 is a binding site for heme. Over 116–124 (VDYVPSKRV) the chain is Mitochondrial matrix. Tyr-118 contacts a ubiquinone. The chain crosses the membrane as a helical span at residues 125 to 149 (PKARKVFTWGLNAATVLVGLALYEF). Over 150–166 (ETTDVGLTETIKRVWKA) the chain is Mitochondrial intermembrane.

It belongs to the CybS family. As to quaternary structure, forms part of complex II containing four subunits: a flavoprotein (FP), an iron-sulfur protein (IP) and a cytochrome b composed of a large and a small subunit.

It localises to the mitochondrion inner membrane. Its pathway is carbohydrate metabolism; tricarboxylic acid cycle. Its function is as follows. Membrane-anchoring subunit of succinate dehydrogenase (SDH) that is involved in complex II of the mitochondrial electron transport chain and is responsible for transferring electrons from succinate to ubiquinone (coenzyme Q). In Neurospora crassa (strain ATCC 24698 / 74-OR23-1A / CBS 708.71 / DSM 1257 / FGSC 987), this protein is Succinate dehydrogenase [ubiquinone] cytochrome b small subunit, mitochondrial.